The primary structure comprises 555 residues: Galectin-3-binding protein (555 aa).

The N-terminal stretch at 1–18 (MAPLRLFWIWLLVVGTRG) is a signal peptide. Residues 24 to 124 (MRLADGGSAN…HDKDASVICT (101 aa)) form the SRCR domain. 3 disulfides stabilise this stretch: cysteine 49/cysteine 113, cysteine 62/cysteine 123, and cysteine 93/cysteine 103. Asparagine 69 is a glycosylation site (N-linked (GlcNAc...) asparagine). N-linked (GlcNAc...) asparagine glycosylation is present at asparagine 125. A BTB domain is found at 153–221 (CDLFITVKVR…LYSRRIDVSL (69 aa)). The 101-residue stretch at 260–360 (PLELYAYALA…MPPQDLFSLQ (101 aa)) folds into the BACK domain. 3 N-linked (GlcNAc...) asparagine glycosylation sites follow: asparagine 362, asparagine 398, and asparagine 550.

Homodimers and homomultimers. The multimers form ring-like structures with a diameter of 30-40 nm. Binds LGALS1 and LGALS3. Binds ITGB1, COL4A1, COL5A1, COL6A1, FN1 and NID. Interacts with the gamma-tubulin ring complex (gamma-TuRC), composed of gamma-tubulin, TUBGCP2, TUBGCP3, TUBGCP4, TUBGCP5 and TUBGCP6. The unglycosylated form interacts with PDE4DIP; this interaction, which is PDE4DIP isoform-specific, may connect a pericentrosomal complex, made of AKAP9, CDK5RAP2, EB1/MAPRE1 and PDE4DIP, to the gamma-tubulin ring complex (gamma-TuRC) to promote microtubule assembly and acetylation.

The protein localises to the secreted. It localises to the extracellular space. The protein resides in the extracellular matrix. In terms of biological role, promotes integrin-mediated cell adhesion. May stimulate host defense against viruses and tumor cells. The protein is Galectin-3-binding protein (LGALS3BP) of Bos taurus (Bovine).